The following is a 181-amino-acid chain: BURP domain-containing protein 7 (181 aa).

An N-terminal signal peptide occupies residues 1–21 (MARSLAALLLLLVAAAGDSHA). Residues 65 to 181 (FFLEKDLFPG…RRGRRTGWRP (117 aa)) form the BURP domain. The segment at 112–181 (QLSVPAGSPA…RRGRRTGWRP (70 aa)) is disordered. The segment covering 128–143 (RPRRSPARRSNARRRS) has biased composition (basic residues). Residues 144–157 (SPWWSSPRPASAPA) are compositionally biased toward low complexity. The segment covering 170 to 181 (GRRRGRRTGWRP) has biased composition (basic residues).

Expressed in roots, stems, leaves and shoot.

The protein is BURP domain-containing protein 7 (BURP7) of Oryza sativa subsp. japonica (Rice).